A 329-amino-acid polypeptide reads, in one-letter code: Ribosomal protein L11 methyltransferase (329 aa).

Positions 177, 198, 220, and 264 each coordinate S-adenosyl-L-methionine.

This sequence belongs to the methyltransferase superfamily. PrmA family.

It is found in the cytoplasm. The enzyme catalyses L-lysyl-[protein] + 3 S-adenosyl-L-methionine = N(6),N(6),N(6)-trimethyl-L-lysyl-[protein] + 3 S-adenosyl-L-homocysteine + 3 H(+). Its function is as follows. Methylates ribosomal protein L11. The sequence is that of Ribosomal protein L11 methyltransferase from Helicobacter acinonychis (strain Sheeba).